The sequence spans 274 residues: Dermonecrotic toxin SdSicTox-betaIIB1bx (274 aa).

H5 is an active-site residue. 2 residues coordinate Mg(2+): E25 and D27. H41 acts as the Nucleophile in catalysis. 2 cysteine pairs are disulfide-bonded: C45/C51 and C47/C190. D85 lines the Mg(2+) pocket.

This sequence belongs to the arthropod phospholipase D family. Class II subfamily. Mg(2+) is required as a cofactor. As to expression, expressed by the venom gland.

The protein localises to the secreted. It carries out the reaction an N-(acyl)-sphingosylphosphocholine = an N-(acyl)-sphingosyl-1,3-cyclic phosphate + choline. It catalyses the reaction an N-(acyl)-sphingosylphosphoethanolamine = an N-(acyl)-sphingosyl-1,3-cyclic phosphate + ethanolamine. The catalysed reaction is a 1-acyl-sn-glycero-3-phosphocholine = a 1-acyl-sn-glycero-2,3-cyclic phosphate + choline. The enzyme catalyses a 1-acyl-sn-glycero-3-phosphoethanolamine = a 1-acyl-sn-glycero-2,3-cyclic phosphate + ethanolamine. Dermonecrotic toxins cleave the phosphodiester linkage between the phosphate and headgroup of certain phospholipids (sphingolipid and lysolipid substrates), forming an alcohol (often choline) and a cyclic phosphate. This toxin acts on sphingomyelin (SM). It may also act on ceramide phosphoethanolamine (CPE), lysophosphatidylcholine (LPC) and lysophosphatidylethanolamine (LPE), but not on lysophosphatidylserine (LPS), and lysophosphatidylglycerol (LPG). It acts by transphosphatidylation, releasing exclusively cyclic phosphate products as second products. Induces dermonecrosis, hemolysis, increased vascular permeability, edema, inflammatory response, and platelet aggregation. In Sicarius cf. damarensis (strain GJB-2008) (Six-eyed sand spider), this protein is Dermonecrotic toxin SdSicTox-betaIIB1bx.